We begin with the raw amino-acid sequence, 345 residues long: Meiotically up-regulated gene 97 protein (345 aa).

The next 2 helical transmembrane spans lie at 292–312 (MWVL…GLWM) and 319–329 (FAHGMLLNLGI).

It localises to the membrane. In terms of biological role, required for correct meiotic chromosome segregation. Appears to also have role in sporulation. This is Meiotically up-regulated gene 97 protein (mug97) from Schizosaccharomyces pombe (strain 972 / ATCC 24843) (Fission yeast).